The sequence spans 604 residues: uncharacterized protein (604 aa).

The region spanning 45-329 is the ABC transmembrane type-1 domain; it reads LPLSFLTVLI…LGQVYNQLLM (285 aa). The next 6 membrane-spanning stretches (helical) occupy residues 49–69, 82–102, 162–182, 184–204, 273–293, and 297–317; these read FLTV…IGVY, LLIQ…AANV, VINL…LFTL, PELT…STSL, LVEM…ATLI, and TITI…WEPI. The 235-residue stretch at 363 to 597 folds into the ABC transporter domain; the sequence is ISFEEVEFSY…GGIYAGLVKA (235 aa). 396–403 is a binding site for ATP; sequence GHTGSGKT.

The protein belongs to the ABC transporter superfamily.

Its subcellular location is the cell membrane. This is an uncharacterized protein from Bacillus subtilis (strain 168).